We begin with the raw amino-acid sequence, 77 residues long: Large ribosomal subunit protein uL29 (77 aa).

This sequence belongs to the universal ribosomal protein uL29 family.

The protein is Large ribosomal subunit protein uL29 of Cutibacterium acnes (strain DSM 16379 / KPA171202) (Propionibacterium acnes).